The primary structure comprises 450 residues: tRNA modification GTPase MnmE (450 aa).

The (6S)-5-formyl-5,6,7,8-tetrahydrofolate site is built by Arg-24, Glu-82, and Lys-121. A TrmE-type G domain is found at 218-375; that stretch reads GMHVVLVGQP…LRQVLLEAVG (158 aa). Asn-228 is a binding site for K(+). GTP contacts are provided by residues 228–233, 247–253, 272–275, and 356–358; these read NVGKSS, TDIAGTT, DTAG, and SAR. A Mg(2+)-binding site is contributed by Ser-232. K(+) is bound by residues Thr-247, Ile-249, and Thr-252. Residue Thr-253 coordinates Mg(2+). Lys-450 contacts (6S)-5-formyl-5,6,7,8-tetrahydrofolate.

The protein belongs to the TRAFAC class TrmE-Era-EngA-EngB-Septin-like GTPase superfamily. TrmE GTPase family. In terms of assembly, homodimer. Heterotetramer of two MnmE and two MnmG subunits. The cofactor is K(+).

It localises to the cytoplasm. Exhibits a very high intrinsic GTPase hydrolysis rate. Involved in the addition of a carboxymethylaminomethyl (cmnm) group at the wobble position (U34) of certain tRNAs, forming tRNA-cmnm(5)s(2)U34. The sequence is that of tRNA modification GTPase MnmE from Laribacter hongkongensis (strain HLHK9).